Reading from the N-terminus, the 864-residue chain is Receptor like protein 24 (864 aa).

An N-terminal signal peptide occupies residues 1-29; it reads MKTVFKSLLLLHFLLLLLLCFVSPSSFFL. The Extracellular segment spans residues 30-830; the sequence is LKVPVGGLVA…EEKGEVINWK (801 aa). 4 N-linked (GlcNAc...) asparagine glycosylation sites follow: N61, N73, N94, and N112. LRR repeat units lie at residues 100–125, 127–148, 156–182, 183–205, 207–229, 230–253, 254–277, 279–303, 305–326, 327–350, 351–376, 378–398, 399–423, 425–448, and 449–472; these read FHQLRYLALNRNNFTSASLPSEFCNL, KLKLLSLFSNGFIDLSHNDLMG, LGKLAVLDLSDNHFSGTLNPNNSLFEL, HSLRYLNLAFNNISSSLPSKFGN, NKLEVLSLSFNGFSGQCFPTISN, LTRITQLYLHNNELTGSFPLVQNL, TKLSFLGLSDNLFSGTIPSYLFTF, SLSTLDLRENDLSGSIEVPNSSTSS, LEIMYLGFNHLEGKILEPISKL, INLKRLDLSFLNTSYPIDLNLLSP, LKSLSYLDFSGNSLSPASLSSSSYIP, SMESIVLSLCGIREFPNILKH, LQNLIHIDITSNQIKGKIPEWLWTL, QLSFVDISNNSFNGFQGSAEVFVN, and LSVRILMLDANNFEGALPTLPLSI. N176, N194, N229, and N252 each carry an N-linked (GlcNAc...) asparagine glycan. A glycan (N-linked (GlcNAc...) asparagine) is linked at N298. N-linked (GlcNAc...) asparagine glycosylation occurs at N338. Residues N433 and N448 are each glycosylated (N-linked (GlcNAc...) asparagine). The LRR 16; degenerate repeat unit spans residues 473–492; sequence IGFSAIHNSFTGEIPLSICN. N-linked (GlcNAc...) asparagine glycosylation is found at N492 and N505. LRR repeat units follow at residues 493-514, 515-538, 539-562, 564-585, 586-610, 613-637, 688-712, 713-735, 736-760, and 762-785; these read RTSLTMVDLSYNNFTGPIPQCL, SNFMFVNLRKNDLEGSIPDTFYTD, SSLKSLDVGYNRLTGKLPRSLLNC, SLRFLSVDNNRVKDTFPFWLKA, LPNLRVLTLRSNKFYGPISPPHQGP, FPELRIFEIADNMFTGSLPPSFFVN, LTSYAAIDFSGNRLQGQIPESIGLL, KALIALNLSNNAFTGHIPLSFAN, LMNLESLDMSGNQLSGTIPNGLGSL, and FLVYISVAHNKLKGEIPQGTQITG. N561 carries an N-linked (GlcNAc...) asparagine glycan. N719 carries an N-linked (GlcNAc...) asparagine glycan. The chain crosses the membrane as a helical span at residues 831-851; sequence AVAIGYAPGLLFGLAIAHLIA. Residues 852 to 864 are Cytoplasmic-facing; it reads SYKPEWLVKIIGF.

The protein belongs to the RLP family.

The protein localises to the cell membrane. The protein is Receptor like protein 24 of Arabidopsis thaliana (Mouse-ear cress).